Reading from the N-terminus, the 313-residue chain is Ribosomal RNA small subunit methyltransferase H (313 aa).

S-adenosyl-L-methionine contacts are provided by residues 35–37, Asp55, Phe79, Asp101, and Gln108; that span reads GGH.

The protein belongs to the methyltransferase superfamily. RsmH family.

It is found in the cytoplasm. The catalysed reaction is cytidine(1402) in 16S rRNA + S-adenosyl-L-methionine = N(4)-methylcytidine(1402) in 16S rRNA + S-adenosyl-L-homocysteine + H(+). Specifically methylates the N4 position of cytidine in position 1402 (C1402) of 16S rRNA. The sequence is that of Ribosomal RNA small subunit methyltransferase H from Shigella flexneri serotype 5b (strain 8401).